The chain runs to 224 residues: Cytochrome c biogenesis ATP-binding export protein CcmA (224 aa).

Residues 1-220 (MQNAEAAPAL…EYAHAEVVGA (220 aa)) form the ABC transporter domain. ATP is bound at residue 40–47 (GANGSGKT).

Belongs to the ABC transporter superfamily. CcmA exporter (TC 3.A.1.107) family. In terms of assembly, the complex is composed of two ATP-binding proteins (CcmA) and two transmembrane proteins (CcmB).

The protein localises to the cell inner membrane. The enzyme catalyses heme b(in) + ATP + H2O = heme b(out) + ADP + phosphate + H(+). Part of the ABC transporter complex CcmAB involved in the biogenesis of c-type cytochromes; once thought to export heme, this seems not to be the case, but its exact role is uncertain. Responsible for energy coupling to the transport system. The protein is Cytochrome c biogenesis ATP-binding export protein CcmA of Bordetella bronchiseptica (strain ATCC BAA-588 / NCTC 13252 / RB50) (Alcaligenes bronchisepticus).